The following is a 314-amino-acid chain: tRNA dimethylallyltransferase (314 aa).

An ATP-binding site is contributed by Gly15–Ser22. Substrate is bound at residue Thr17–Ser22. Residues Asp40–Leu43 are interaction with substrate tRNA.

It belongs to the IPP transferase family. In terms of assembly, monomer. The cofactor is Mg(2+).

The catalysed reaction is adenosine(37) in tRNA + dimethylallyl diphosphate = N(6)-dimethylallyladenosine(37) in tRNA + diphosphate. Functionally, catalyzes the transfer of a dimethylallyl group onto the adenine at position 37 in tRNAs that read codons beginning with uridine, leading to the formation of N6-(dimethylallyl)adenosine (i(6)A). This is tRNA dimethylallyltransferase from Pelotomaculum thermopropionicum (strain DSM 13744 / JCM 10971 / SI).